Reading from the N-terminus, the 443-residue chain is ATP-dependent protease ATPase subunit HslU (443 aa).

Residues valine 18 and 60-65 contribute to the ATP site; that span reads GVGKTE. The tract at residues 139–160 is disordered; sequence AKNNWGQPEESGEPSSARQNFR. ATP-binding residues include aspartate 256, glutamate 321, and arginine 393.

Belongs to the ClpX chaperone family. HslU subfamily. A double ring-shaped homohexamer of HslV is capped on each side by a ring-shaped HslU homohexamer. The assembly of the HslU/HslV complex is dependent on binding of ATP.

It localises to the cytoplasm. ATPase subunit of a proteasome-like degradation complex; this subunit has chaperone activity. The binding of ATP and its subsequent hydrolysis by HslU are essential for unfolding of protein substrates subsequently hydrolyzed by HslV. HslU recognizes the N-terminal part of its protein substrates and unfolds these before they are guided to HslV for hydrolysis. The protein is ATP-dependent protease ATPase subunit HslU of Sodalis glossinidius (strain morsitans).